The primary structure comprises 463 residues: Eukaryotic translation initiation factor 3 subunit E (463 aa).

The 184-residue stretch at 224 to 407 (FNLGENQGCQ…NMLHITRPHA (184 aa)) folds into the PCI domain. Residues 432-463 (QSSVGEPRERGERGERGNKGGRGRPRTQEVAA) form a disordered region. A compositionally biased stretch (basic and acidic residues) spans 437-449 (EPRERGERGERGN).

The protein belongs to the eIF-3 subunit E family. Component of the eukaryotic translation initiation factor 3 (eIF-3) complex.

Its subcellular location is the cytoplasm. Component of the eukaryotic translation initiation factor 3 (eIF-3) complex, which is involved in protein synthesis of a specialized repertoire of mRNAs and, together with other initiation factors, stimulates binding of mRNA and methionyl-tRNAi to the 40S ribosome. The eIF-3 complex specifically targets and initiates translation of a subset of mRNAs involved in cell proliferation. The chain is Eukaryotic translation initiation factor 3 subunit E from Cryptococcus neoformans var. neoformans serotype D (strain JEC21 / ATCC MYA-565) (Filobasidiella neoformans).